The following is a 355-amino-acid chain: UDP-N-acetylglucosamine--N-acetylmuramyl-(pentapeptide) pyrophosphoryl-undecaprenol N-acetylglucosamine transferase (355 aa).

UDP-N-acetyl-alpha-D-glucosamine is bound by residues 15–17, Asn-127, Arg-163, Ser-191, Ile-244, 263–268, and Gln-288; these read TGG and ALTVSE.

It belongs to the glycosyltransferase 28 family. MurG subfamily.

It is found in the cell inner membrane. It catalyses the reaction di-trans,octa-cis-undecaprenyl diphospho-N-acetyl-alpha-D-muramoyl-L-alanyl-D-glutamyl-meso-2,6-diaminopimeloyl-D-alanyl-D-alanine + UDP-N-acetyl-alpha-D-glucosamine = di-trans,octa-cis-undecaprenyl diphospho-[N-acetyl-alpha-D-glucosaminyl-(1-&gt;4)]-N-acetyl-alpha-D-muramoyl-L-alanyl-D-glutamyl-meso-2,6-diaminopimeloyl-D-alanyl-D-alanine + UDP + H(+). The protein operates within cell wall biogenesis; peptidoglycan biosynthesis. Cell wall formation. Catalyzes the transfer of a GlcNAc subunit on undecaprenyl-pyrophosphoryl-MurNAc-pentapeptide (lipid intermediate I) to form undecaprenyl-pyrophosphoryl-MurNAc-(pentapeptide)GlcNAc (lipid intermediate II). In Photorhabdus laumondii subsp. laumondii (strain DSM 15139 / CIP 105565 / TT01) (Photorhabdus luminescens subsp. laumondii), this protein is UDP-N-acetylglucosamine--N-acetylmuramyl-(pentapeptide) pyrophosphoryl-undecaprenol N-acetylglucosamine transferase.